The primary structure comprises 275 residues: Cytochrome c oxidase subunit 3 (275 aa).

The next 7 helical transmembrane spans lie at 22–42 (PWPL…VMYF), 52–72 (SGAL…ALWF), 96–116 (GVAL…WAFF), 132–152 (PVGI…ILLL), 173–193 (AILG…CQGI), 211–231 (FFFS…FIAV), and 253–273 (ILYW…VYWW).

This sequence belongs to the cytochrome c oxidase subunit 3 family. In terms of assembly, component of the cytochrome c oxidase (complex IV, CIV), a multisubunit enzyme composed of a catalytic core of 3 subunits and several supernumerary subunits. The complex exists as a monomer or a dimer and forms supercomplexes (SCs) in the inner mitochondrial membrane with ubiquinol-cytochrome c oxidoreductase (cytochrome b-c1 complex, complex III, CIII).

It is found in the mitochondrion inner membrane. The catalysed reaction is 4 Fe(II)-[cytochrome c] + O2 + 8 H(+)(in) = 4 Fe(III)-[cytochrome c] + 2 H2O + 4 H(+)(out). Its function is as follows. Component of the cytochrome c oxidase, the last enzyme in the mitochondrial electron transport chain which drives oxidative phosphorylation. The respiratory chain contains 3 multisubunit complexes succinate dehydrogenase (complex II, CII), ubiquinol-cytochrome c oxidoreductase (cytochrome b-c1 complex, complex III, CIII) and cytochrome c oxidase (complex IV, CIV), that cooperate to transfer electrons derived from NADH and succinate to molecular oxygen, creating an electrochemical gradient over the inner membrane that drives transmembrane transport and the ATP synthase. Cytochrome c oxidase is the component of the respiratory chain that catalyzes the reduction of oxygen to water. Electrons originating from reduced cytochrome c in the intermembrane space (IMS) are transferred via the dinuclear copper A center (CU(A)) of subunit 2 and heme A of subunit 1 to the active site in subunit 1, a binuclear center (BNC) formed by heme A3 and copper B (CU(B)). The BNC reduces molecular oxygen to 2 water molecules using 4 electrons from cytochrome c in the IMS and 4 protons from the mitochondrial matrix. The chain is Cytochrome c oxidase subunit 3 (COX3) from Mycosarcoma maydis (Corn smut fungus).